The primary structure comprises 1407 residues: MKDLLKFLKAQTKTEEFDAIKIALASPDMIRSWSFGEVKKPETINYRTFKPERDGLFCARIFGPVKDYECLCGKYKRLKHRGVICEKCGVEVTQTKVRRERMGHIELASPTAHIWFLKSLPSRIGLLLDMPLRDIERVLYFESYVVIEGGMTNLERQQILTEEQYLDALEEFGDEFDAKMGAEAIQALLKSMDLEQECETLREELNETNSETKRKKLTKRIKLLEAFVQSGNKPEWMILTVLPVLPPDLRPLVPLDGGRFATSDLNDLYRRVINRNNRLKRLLDLAAPDIIVRNEKRMLQEAVDALLDNGRRGRAITGSNKRPLKSLADMIKGKQGRFRQNLLGKRVDYSGRSVITVGPYLRLHQCGLPKKMALELFKPFIYGKLELRGLATTIKAAKKMVEREEAVVWDILDEVIREHPVLLNRAPTLHRLGIQAFEPVLIEGKAIQLHPLVCAAYNADFDGDQMAVHVPLTLEAQLEARALMMSTNNILSPANGEPIIVPSQDVVLGLYYMTRDCVNAKGEGMVLTGPKEAERIYRAGLASLHARVKVRITEYEKDENGELVAHTSLKDTTVGRAILWMIVPKGLPFSIVNQALGKKAISKMLNTCYRILGLKPTVIFADQTMYTGFAYAARSGASVGIDDMVIPEKKHEIISEAEAEVAEIQEQFQSGLVTAGERYNKVIDIWAAANDRVSKAMMDNLQTETVVNRDGQEEQQVSFNSIYMMADSGARGSAAQIRQLAGMRGLMAKPDGSIIETPITANFREGLNVLQYFISTHGARKGLADTALKTANSGYLTRRLVDVAQDLVVTEDDCGTHEGILMTPVIEGGDVKEPLRDRVLGRVTAEDVLKPGTADILVPRNTLLHEQWCDLLEANSVDAVKVRSVVSCDTDFGVCAHCYGRDLARGHIINKGEAIGVIAAQSIGEPGTQLTMRTFHIGGAASRAAAESSIQVKNKGSIKLSNVKSVVNSSGKLVITSRNTELKLIDEFGRTKESYKVPYGAVMAKGDGEQVAGGETVANWDPHTMPVITEVSGFIRFTDMIDGQTITRQTDELTGLSSLVVLDSAERTTGGKDLRPALKIVDAQGNDVLIPGTDMPAQYFLPGKAIVQLEDGVQISSGDTLARIPQESGGTKDITGGLPRVADLFEARRPKEPAILAEIAGIVSFGKETKGKRRLVITPVDGSDPYEEMIPKWRQLNVFEGERVERGDVISDGPEAPHDILRLRGVHAVTRYIVNEVQDVYRLQGVKINDKHIEVIVRQMLRKATIESAGSSDFLEGEQVEYSRVKIANRELEANGKVGATFSRDLLGITKASLATESFISAASFQETTRVLTEAAVAGKRDELRGLKENVIVGRLIPAGTGYAYHQDRMRRRAAGEQPATPQVTAEDASASLAELLNAGLGGSDNE.

Zn(2+) is bound by residues Cys-70, Cys-72, Cys-85, and Cys-88. Positions 460, 462, and 464 each coordinate Mg(2+). Zn(2+)-binding residues include Cys-814, Cys-888, Cys-895, and Cys-898.

Belongs to the RNA polymerase beta' chain family. In terms of assembly, the RNAP catalytic core consists of 2 alpha, 1 beta, 1 beta' and 1 omega subunit. When a sigma factor is associated with the core the holoenzyme is formed, which can initiate transcription. The cofactor is Mg(2+). Zn(2+) is required as a cofactor.

It catalyses the reaction RNA(n) + a ribonucleoside 5'-triphosphate = RNA(n+1) + diphosphate. DNA-dependent RNA polymerase catalyzes the transcription of DNA into RNA using the four ribonucleoside triphosphates as substrates. The sequence is that of DNA-directed RNA polymerase subunit beta' from Salmonella paratyphi B (strain ATCC BAA-1250 / SPB7).